A 163-amino-acid polypeptide reads, in one-letter code: Transcription elongation factor GreB (163 aa).

Positions 54-76 (GKRRMREIDRRIRFLTKRLEAAV) form a coiled coil.

This sequence belongs to the GreA/GreB family. GreB subfamily.

Necessary for efficient RNA polymerase transcription elongation past template-encoded arresting sites. The arresting sites in DNA have the property of trapping a certain fraction of elongating RNA polymerases that pass through, resulting in locked ternary complexes. Cleavage of the nascent transcript by cleavage factors such as GreA or GreB allows the resumption of elongation from the new 3'terminus. GreB releases sequences of up to 9 nucleotides in length. The sequence is that of Transcription elongation factor GreB from Neisseria meningitidis serogroup B (strain ATCC BAA-335 / MC58).